We begin with the raw amino-acid sequence, 407 residues long: Acetate kinase (407 aa).

Asparagine 10 is a Mg(2+) binding site. Lysine 17 is an ATP binding site. Residue arginine 91 coordinates substrate. Aspartate 150 serves as the catalytic Proton donor/acceptor. ATP is bound by residues 210-214 (HLGNG), 285-287 (DCR), and 338-342 (GIGEN). Residue glutamate 392 coordinates Mg(2+).

This sequence belongs to the acetokinase family. As to quaternary structure, homodimer. Mg(2+) is required as a cofactor. It depends on Mn(2+) as a cofactor.

Its subcellular location is the cytoplasm. The enzyme catalyses acetate + ATP = acetyl phosphate + ADP. The protein operates within metabolic intermediate biosynthesis; acetyl-CoA biosynthesis; acetyl-CoA from acetate: step 1/2. Its function is as follows. Catalyzes the formation of acetyl phosphate from acetate and ATP. Can also catalyze the reverse reaction. In Mannheimia succiniciproducens (strain KCTC 0769BP / MBEL55E), this protein is Acetate kinase.